The following is a 920-amino-acid chain: Isoleucine--tRNA ligase (920 aa).

The 'HIGH' region signature appears at 57 to 67; sequence PYANGDIHLGH. Glu560 is a binding site for L-isoleucyl-5'-AMP. The short motif at 601–605 is the 'KMSKS' region element; it reads KMSKS. Residue Lys604 coordinates ATP. Residues Cys890, Cys893, Cys910, and Cys913 each coordinate Zn(2+).

The protein belongs to the class-I aminoacyl-tRNA synthetase family. IleS type 1 subfamily. Monomer. Zn(2+) serves as cofactor.

It localises to the cytoplasm. The catalysed reaction is tRNA(Ile) + L-isoleucine + ATP = L-isoleucyl-tRNA(Ile) + AMP + diphosphate. Functionally, catalyzes the attachment of isoleucine to tRNA(Ile). As IleRS can inadvertently accommodate and process structurally similar amino acids such as valine, to avoid such errors it has two additional distinct tRNA(Ile)-dependent editing activities. One activity is designated as 'pretransfer' editing and involves the hydrolysis of activated Val-AMP. The other activity is designated 'posttransfer' editing and involves deacylation of mischarged Val-tRNA(Ile). In Caldicellulosiruptor bescii (strain ATCC BAA-1888 / DSM 6725 / KCTC 15123 / Z-1320) (Anaerocellum thermophilum), this protein is Isoleucine--tRNA ligase.